The following is a 370-amino-acid chain: DNA polymerase IV (370 aa).

The UmuC domain occupies 14-198; sequence IIHIDMDAFF…LPIEKFYGVG (185 aa). Mg(2+) contacts are provided by Asp-18 and Asp-116. The active site involves Glu-117.

The protein belongs to the DNA polymerase type-Y family. Monomer. It depends on Mg(2+) as a cofactor.

The protein resides in the cytoplasm. The catalysed reaction is DNA(n) + a 2'-deoxyribonucleoside 5'-triphosphate = DNA(n+1) + diphosphate. Its function is as follows. Poorly processive, error-prone DNA polymerase involved in untargeted mutagenesis. Copies undamaged DNA at stalled replication forks, which arise in vivo from mismatched or misaligned primer ends. These misaligned primers can be extended by PolIV. Exhibits no 3'-5' exonuclease (proofreading) activity. May be involved in translesional synthesis, in conjunction with the beta clamp from PolIII. This Streptococcus mutans serotype c (strain ATCC 700610 / UA159) protein is DNA polymerase IV.